Here is a 430-residue protein sequence, read N- to C-terminus: Trigger factor (430 aa).

In terms of domain architecture, PPIase FKBP-type spans 157–242; that stretch reads GDLVALETWS…AVEVSEPVLP (86 aa).

It belongs to the FKBP-type PPIase family. Tig subfamily.

The protein localises to the cytoplasm. It carries out the reaction [protein]-peptidylproline (omega=180) = [protein]-peptidylproline (omega=0). In terms of biological role, involved in protein export. Acts as a chaperone by maintaining the newly synthesized protein in an open conformation. Functions as a peptidyl-prolyl cis-trans isomerase. This chain is Trigger factor, found in Xanthomonas axonopodis pv. citri (strain 306).